We begin with the raw amino-acid sequence, 81 residues long: Photosystem I iron-sulfur center (81 aa).

4Fe-4S ferredoxin-type domains are found at residues 1-31 (MAHS…MVPW) and 39-68 (IASA…VRVY). The [4Fe-4S] cluster site is built by C11, C14, C17, C21, C48, C51, C54, and C58.

The eukaryotic PSI reaction center is composed of at least 11 subunits. [4Fe-4S] cluster is required as a cofactor.

It is found in the plastid. The protein resides in the chloroplast thylakoid membrane. It catalyses the reaction reduced [plastocyanin] + hnu + oxidized [2Fe-2S]-[ferredoxin] = oxidized [plastocyanin] + reduced [2Fe-2S]-[ferredoxin]. Its function is as follows. Apoprotein for the two 4Fe-4S centers FA and FB of photosystem I (PSI); essential for photochemical activity. FB is the terminal electron acceptor of PSI, donating electrons to ferredoxin. The C-terminus interacts with PsaA/B/D and helps assemble the protein into the PSI complex. Required for binding of PsaD and PsaE to PSI. PSI is a plastocyanin-ferredoxin oxidoreductase, converting photonic excitation into a charge separation, which transfers an electron from the donor P700 chlorophyll pair to the spectroscopically characterized acceptors A0, A1, FX, FA and FB in turn. The chain is Photosystem I iron-sulfur center from Welwitschia mirabilis (Tree tumbo).